A 168-amino-acid chain; its full sequence is Photosystem I assembly protein Ycf3 (168 aa).

TPR repeat units follow at residues 35 to 68, 72 to 105, and 120 to 153; these read AFTY…EIDP, SYIL…NPFL, and GEQA…TPGN.

This sequence belongs to the Ycf3 family.

The protein localises to the plastid. It is found in the chloroplast thylakoid membrane. In terms of biological role, essential for the assembly of the photosystem I (PSI) complex. May act as a chaperone-like factor to guide the assembly of the PSI subunits. This chain is Photosystem I assembly protein Ycf3, found in Ranunculus macranthus (Large buttercup).